The primary structure comprises 105 residues: U1-sicaritoxin-Li1b (105 aa).

The first 19 residues, 1 to 19 (MKLLFEGLLVLVLIAFVVA), serve as a signal peptide directing secretion. The propeptide occupies 20 to 36 (EFESDAEKWEALITQER). Disulfide bonds link Cys38–Cys55, Cys46–Cys60, Cys54–Cys73, and Cys62–Cys71. Position 82 is an arginine amide (Arg82). The propeptide occupies 86-105 (ALMVDPETHRMLSLHRLSEE).

It belongs to the neurotoxin 28 (Litx) family. As to expression, expressed by the venom gland.

It localises to the secreted. In terms of biological role, toxin active against insects (S.frugiperda larvae). May act on sodium (Nav) or calcium (Cav) channels. This chain is U1-sicaritoxin-Li1b, found in Loxosceles intermedia (Brown spider).